Here is a 329-residue protein sequence, read N- to C-terminus: Phenylalanine--tRNA ligase alpha subunit (329 aa).

Glu254 lines the Mg(2+) pocket.

This sequence belongs to the class-II aminoacyl-tRNA synthetase family. Phe-tRNA synthetase alpha subunit type 1 subfamily. As to quaternary structure, tetramer of two alpha and two beta subunits. The cofactor is Mg(2+).

It is found in the cytoplasm. The enzyme catalyses tRNA(Phe) + L-phenylalanine + ATP = L-phenylalanyl-tRNA(Phe) + AMP + diphosphate + H(+). The polypeptide is Phenylalanine--tRNA ligase alpha subunit (pheS) (Haemophilus influenzae (strain ATCC 51907 / DSM 11121 / KW20 / Rd)).